The chain runs to 158 residues: UPF0262 protein RHOS4_22360 (158 aa).

Belongs to the UPF0262 family.

This chain is UPF0262 protein RHOS4_22360, found in Cereibacter sphaeroides (strain ATCC 17023 / DSM 158 / JCM 6121 / CCUG 31486 / LMG 2827 / NBRC 12203 / NCIMB 8253 / ATH 2.4.1.) (Rhodobacter sphaeroides).